The chain runs to 241 residues: Nopaline transport system permease protein NocM (241 aa).

The region spanning 17–215 is the ABC transmembrane type-1 domain; it reads VPTTLTLAFI…FITFVVSRLV (199 aa). 5 helical membrane passes run 21–41, 52–72, 95–115, 161–181, and 191–211; these read LTLA…VALM, LAYG…MFLI, PWFC…SEII, VMLI…EVTG, and YSPV…TFVV.

It belongs to the binding-protein-dependent transport system permease family. HisMQ subfamily.

Its subcellular location is the cell inner membrane. Functionally, component of the nopaline active transport system probably consisting of four subunits: Q, M, P and T. This system is also capable of transporting octopine provided that catabolic functions are induced with nopaline. This chain is Nopaline transport system permease protein NocM (nocM), found in Agrobacterium fabrum (strain C58 / ATCC 33970) (Agrobacterium tumefaciens (strain C58)).